A 356-amino-acid chain; its full sequence is tRNA N6-adenosine threonylcarbamoyltransferase (356 aa).

The Fe cation site is built by His115 and His119. Residues 138 to 142 (LVSGG), Asp171, Gly184, and Asn283 each bind substrate. Asp311 serves as a coordination point for Fe cation.

This sequence belongs to the KAE1 / TsaD family. Requires Fe(2+) as cofactor.

It localises to the cytoplasm. The enzyme catalyses L-threonylcarbamoyladenylate + adenosine(37) in tRNA = N(6)-L-threonylcarbamoyladenosine(37) in tRNA + AMP + H(+). Required for the formation of a threonylcarbamoyl group on adenosine at position 37 (t(6)A37) in tRNAs that read codons beginning with adenine. Is involved in the transfer of the threonylcarbamoyl moiety of threonylcarbamoyl-AMP (TC-AMP) to the N6 group of A37, together with TsaE and TsaB. TsaD likely plays a direct catalytic role in this reaction. The polypeptide is tRNA N6-adenosine threonylcarbamoyltransferase (Prochlorococcus marinus (strain NATL2A)).